The chain runs to 56 residues: U-megalopygitoxin(2)-Mo9 (56 aa).

An N-terminal signal peptide occupies residues 1–25; that stretch reads MKFIVLLLIVTSVLMMFAVTTEASP. Gln26 carries the pyrrolidone carboxylic acid modification. Thr55 bears the Threonine amide mark.

It belongs to the caterpillar 2 family. In terms of processing, contains 2 disulfide bonds. In terms of tissue distribution, expressed by the venom apparatus.

The protein localises to the secreted. Its function is as follows. Probable toxin. The protein is U-megalopygitoxin(2)-Mo9 of Megalopyge opercularis (Southern flannel moth).